The primary structure comprises 1222 residues: BOS complex subunit NOMO1 (1222 aa).

Positions Met1 to Gly31 are cleaved as a signal peptide. Over Ser32 to Asp1155 the chain is Extracellular. Asn50, Asn218, and Asn618 each carry an N-linked (GlcNAc...) asparagine glycan. A helical membrane pass occupies residues Ile1156–Asn1176. Residues His1177 to Thr1222 are Cytoplasmic-facing. Positions Gly1198–Thr1222 are disordered. A Phosphoserine modification is found at Ser1205. Residues Gln1213–Thr1222 show a composition bias toward basic residues.

In terms of assembly, component of the back of Sec61 (BOS) complex, composed of NCLN/Nicalin, NOMO (NOMO1, NOMO2 or NOMO3) and TMEM147. The BOS complex is part of the multi-pass translocon (MPT) complex, composed of three subcomplexes, the GEL complex (composed of RAB5IF/OPTI and TMCO1), the BOS complex (composed of NCLN/Nicalin, NOMO and TMEM147) and the PAT complex (composed of WDR83OS/Asterix and CCDC47). The MPT complex associates with the SEC61 complex. Due to the strong similarity between NOMO1, NOMO2 and NOMO3, similar interaction pattern probably occur for the three gene copies. Expressed in colon tumor tissue and in adjacent normal colonic mucosa.

The protein resides in the endoplasmic reticulum membrane. Functionally, component of the multi-pass translocon (MPT) complex that mediates insertion of multi-pass membrane proteins into the lipid bilayer of membranes. The MPT complex takes over after the SEC61 complex: following membrane insertion of the first few transmembrane segments of proteins by the SEC61 complex, the MPT complex occludes the lateral gate of the SEC61 complex to promote insertion of subsequent transmembrane regions. This Homo sapiens (Human) protein is BOS complex subunit NOMO1 (NOMO1).